Reading from the N-terminus, the 150-residue chain is Myosin, essential light chain (150 aa).

2 EF-hand domains span residues 3 to 38 (ASAD…LGKS) and 75 to 110 (EQQK…LGDY). Ca(2+)-binding residues include aspartate 16, aspartate 18, aspartate 20, lysine 22, and aspartate 27.

Myosin is a hexamer of 2 heavy chains and 4 light chains (two regulatory light chains and two essential light chains).

This chain is Myosin, essential light chain (mlcE), found in Dictyostelium discoideum (Social amoeba).